The sequence spans 284 residues: 4-hydroxybenzoate octaprenyltransferase (284 aa).

A run of 8 helical transmembrane segments spans residues 18 to 38 (PIGT…AAEG), 42 to 62 (WHVL…GCVI), 93 to 113 (IILF…MNPL), 136 to 156 (HLPQ…AWAA), 161 to 181 (LPWV…AYDT), 209 to 229 (LIIG…GLHY), 233 to 253 (QSFY…QHLI), and 264 to 284 (AFLN…VAFW).

Belongs to the UbiA prenyltransferase family. Requires Mg(2+) as cofactor.

It localises to the cell inner membrane. It catalyses the reaction all-trans-octaprenyl diphosphate + 4-hydroxybenzoate = 4-hydroxy-3-(all-trans-octaprenyl)benzoate + diphosphate. The protein operates within cofactor biosynthesis; ubiquinone biosynthesis. Catalyzes the prenylation of para-hydroxybenzoate (PHB) with an all-trans polyprenyl group. Mediates the second step in the final reaction sequence of ubiquinone-8 (UQ-8) biosynthesis, which is the condensation of the polyisoprenoid side chain with PHB, generating the first membrane-bound Q intermediate 3-octaprenyl-4-hydroxybenzoate. This chain is 4-hydroxybenzoate octaprenyltransferase, found in Vibrio vulnificus (strain CMCP6).